The primary structure comprises 1109 residues: Ankyrin repeat- and BTB/POZ domain-containing protein 3 (1109 aa).

A helical transmembrane segment spans residues 168–188 (IVLSWGLAAHCTAAALAALSL). The interval 260-302 (SCSGPGPGSSSGSGPGPGSGPGAPAADKERETPGGGAASGGPC) is disordered. Residues 264–280 (PGPGSSSGSGPGPGSGP) show a composition bias toward gly residues. ANK repeat units lie at residues 608 to 637 (QGMT…DLNV), 654 to 683 (RHWT…KVEG), 692 to 721 (YSET…DPLI), 735 to 764 (GDMN…KEKS), and 830 to 859 (TWLE…TIQE). In terms of domain architecture, BTB spans 928 to 994 (SDVTFLVEGR…LYYGGPESLL (67 aa)).

The protein resides in the membrane. The sequence is that of Ankyrin repeat- and BTB/POZ domain-containing protein 3 (Abtb3) from Mus musculus (Mouse).